A 251-amino-acid polypeptide reads, in one-letter code: Plant UBX domain-containing protein 1 (251 aa).

Met-1 is modified (N-acetylmethionine). Residues 104-180 (SKLTKAVIRV…GFVPGAIVYF (77 aa)) enclose the UBX domain. The tract at residues 212–251 (AVEPVESSSEPATVDSSAVPVEHERKSTEKKTTKPKWFKM) is disordered. Residues 217–227 (ESSSEPATVDS) are compositionally biased toward polar residues. Positions 232-243 (VEHERKSTEKKT) are enriched in basic and acidic residues.

In terms of assembly, interacts with CDC48A (non-hexameric) via its UBX-containing C-terminal domain.

Its subcellular location is the cytoplasm. Regulates CDC48A by inhibiting its ATPase activity and by promoting the disassembly of the active hexamer. In Arabidopsis thaliana (Mouse-ear cress), this protein is Plant UBX domain-containing protein 1.